The primary structure comprises 652 residues: Complement component C1q receptor (652 aa).

Residues 1 to 21 form the signal peptide; sequence MATSMGLLLLLLLLLTQPGAG. The Extracellular segment spans residues 24 to 580; it reads ADTEAVVCVG…QNNDGTDGQK (557 aa). The 143-residue stretch at 32-174 folds into the C-type lectin domain; sequence VGTACYTAHS…CGSPGSPGSN (143 aa). Intrachain disulfides connect Cys-141–Cys-165, Cys-264–Cys-275, Cys-271–Cys-285, Cys-287–Cys-300, Cys-306–Cys-317, Cys-311–Cys-328, Cys-330–Cys-343, Cys-349–Cys-358, Cys-354–Cys-367, Cys-369–Cys-383, Cys-389–Cys-400, Cys-396–Cys-409, Cys-411–Cys-425, Cys-431–Cys-443, Cys-439–Cys-452, and Cys-454–Cys-467. EGF-like domains lie at 260 to 301 and 302 to 344; these read PKYG…VTCA and SRNP…LDCV. Residue Asn-325 is glycosylated (N-linked (GlcNAc...) asparagine). An EGF-like 3; calcium-binding domain is found at 345-384; sequence DVDECQDSPCAQECVNTPGGFRCECWVGYEPGGPGEGACQ. The 42-residue stretch at 385 to 426 folds into the EGF-like 4; calcium-binding domain; it reads DVDECALGRSPCAQGCTNTDGSFHCSCEEGYVLAGEDGTQCQ. Residues 427–468 enclose the EGF-like 5; calcium-binding domain; it reads DVDECVGPGGPLCDSLCFNTQGSFHCGCLPGWVLAPNGVSCT. 2 disordered regions span residues 472 to 546 and 553 to 572; these read VSLG…VWRE and TAASGPQEPAGGDSSVATQN. Residues 512-526 are compositionally biased toward polar residues; the sequence is ATPTTSRPSLSSDAP. The chain crosses the membrane as a helical span at residues 581-601; the sequence is LLLFYILGTVVAILLLLALAL. The Cytoplasmic portion of the chain corresponds to 602-652; it reads GLLVYRKRRAKREEKKEKKPQNAADSYSWVPERAESRAMENQYSPTPGTDC. The interval 611–652 is disordered; it reads AKREEKKEKKPQNAADSYSWVPERAESRAMENQYSPTPGTDC. A compositionally biased stretch (basic and acidic residues) spans 612 to 621; it reads KREEKKEKKP. Ser-627 is subject to Phosphoserine. 2 positions are modified to phosphotyrosine: Tyr-628 and Tyr-644. The span at 640 to 652 shows a compositional bias: polar residues; sequence MENQYSPTPGTDC.

As to quaternary structure, homodimer. Interacts with C1QBP; the association may represent a cell surface C1q receptor. Interacts with surfactant protein A/SFTPA1. Interacts with multimerin-2/MMRN2. Interacts with DAG1; this interaction plays an important role in endothelial cell migration. Interacts with CBL. Interacts with IGFBP7. Interacts with VEGFR2. (Microbial infection) Interacts with hepatitis virus C/HCV core protein. N- and O-glycosylated. In terms of processing, phosphorylated on Tyr-628 and Tyr-644 by SRC; these phosphorylations promote endothelial cell adhesion and migration. In terms of tissue distribution, highly expressed in endothelial cells, platelets, cells of myeloid origin, such as monocytes and neutrophils. Not expressed in cells of lymphoid origin.

Its subcellular location is the cell membrane. Functionally, cell surface receptor that plays a role in various physiological processes including inflammation, phagocytosis, and cell adhesion. Plays a role in phagocytosis and enhances the uptake of apoptotic cells and immune complexes by acting as a receptor for defense collagens including surfactant protein A/SFTPA1, C1q, and mannose-binding lectin (MBL2). Plays a role in the regulation of endothelial cell function and adhesion by activating angiogenesis. Mechanistically, exerts its angiogenic function by associating with beta-dystroglycan, leading to SRC-dependent phosphorylation and subsequent recruitment of CBL. In turn, CBL provides a docking site for downstream signaling components, such as CRKL to enhance cell migration. Participates in angiogenesis also by acting as a receptor for the ECM pan-endothelial glycoprotein multimerin-2/MMRN2 and IGFBP7 ligands. Both ligands play a non-redundant role in CD93-mediated endothelial cell function. Acts as a key regulator of endothelial barrier function through modulating VEGFR2 function. The chain is Complement component C1q receptor (CD93) from Homo sapiens (Human).